We begin with the raw amino-acid sequence, 1091 residues long: Error-prone DNA polymerase 1 (1091 aa).

The span at 1051–1064 shows a compositional bias: basic and acidic residues; that stretch reads RGDEFHHGMPDDHR. Residues 1051–1080 are disordered; that stretch reads RGDEFHHGMPDDHRAIRKRPPPSNHDDDEV.

The protein belongs to the DNA polymerase type-C family. DnaE2 subfamily.

The protein localises to the cytoplasm. The catalysed reaction is DNA(n) + a 2'-deoxyribonucleoside 5'-triphosphate = DNA(n+1) + diphosphate. In terms of biological role, DNA polymerase involved in damage-induced mutagenesis and translesion synthesis (TLS). It is not the major replicative DNA polymerase. The sequence is that of Error-prone DNA polymerase 1 from Agrobacterium fabrum (strain C58 / ATCC 33970) (Agrobacterium tumefaciens (strain C58)).